The chain runs to 319 residues: ATP-dependent 6-phosphofructokinase (319 aa).

An ATP-binding site is contributed by glycine 11. Residue 21–25 (RAVVR) participates in ADP binding. ATP is bound by residues 72–73 (RC) and 102–105 (GEGS). Glutamate 103 contributes to the Mg(2+) binding site. 126–128 (TID) contacts substrate. The active-site Proton acceptor is the aspartate 128. Lysine 155 contacts ADP. Substrate-binding positions include arginine 163 and 170-172 (MGR). ADP contacts are provided by residues 186–188 (GAE), arginine 212, and 214–216 (KIN). Substrate-binding positions include glutamate 223, arginine 244, and 250–253 (HVQR).

The protein belongs to the phosphofructokinase type A (PFKA) family. ATP-dependent PFK group I subfamily. Prokaryotic clade 'B1' sub-subfamily. Homotetramer. Mg(2+) is required as a cofactor.

The protein localises to the cytoplasm. It carries out the reaction beta-D-fructose 6-phosphate + ATP = beta-D-fructose 1,6-bisphosphate + ADP + H(+). It participates in carbohydrate degradation; glycolysis; D-glyceraldehyde 3-phosphate and glycerone phosphate from D-glucose: step 3/4. With respect to regulation, allosterically activated by ADP and other diphosphonucleosides, and allosterically inhibited by phosphoenolpyruvate. Its function is as follows. Catalyzes the phosphorylation of D-fructose 6-phosphate to fructose 1,6-bisphosphate by ATP, the first committing step of glycolysis. The sequence is that of ATP-dependent 6-phosphofructokinase from Thermotoga neapolitana (strain ATCC 49049 / DSM 4359 / NBRC 107923 / NS-E).